The primary structure comprises 404 residues: Phosphopentomutase (404 aa).

Residues Asp10, Asp303, His308, Asp344, His345, and His356 each coordinate Mn(2+).

The protein belongs to the phosphopentomutase family. The cofactor is Mn(2+).

It is found in the cytoplasm. It catalyses the reaction 2-deoxy-alpha-D-ribose 1-phosphate = 2-deoxy-D-ribose 5-phosphate. The catalysed reaction is alpha-D-ribose 1-phosphate = D-ribose 5-phosphate. It functions in the pathway carbohydrate degradation; 2-deoxy-D-ribose 1-phosphate degradation; D-glyceraldehyde 3-phosphate and acetaldehyde from 2-deoxy-alpha-D-ribose 1-phosphate: step 1/2. Its function is as follows. Isomerase that catalyzes the conversion of deoxy-ribose 1-phosphate (dRib-1-P) and ribose 1-phosphate (Rib-1-P) to deoxy-ribose 5-phosphate (dRib-5-P) and ribose 5-phosphate (Rib-5-P), respectively. This is Phosphopentomutase from Shewanella baltica (strain OS185).